Reading from the N-terminus, the 200-residue chain is Recombination protein RecR (200 aa).

The C4-type zinc-finger motif lies at 58–73 (CQKCHNISDTTLCSIC). The region spanning 81–176 (GLICVVENIQ…KLSNIARGVA (96 aa)) is the Toprim domain.

Belongs to the RecR family.

Functionally, may play a role in DNA repair. It seems to be involved in an RecBC-independent recombinational process of DNA repair. It may act with RecF and RecO. The sequence is that of Recombination protein RecR from Amoebophilus asiaticus (strain 5a2).